The sequence spans 180 residues: ATP-dependent protease subunit HslV (180 aa).

T7 is a catalytic residue. G165, C168, and T171 together coordinate Na(+).

The protein belongs to the peptidase T1B family. HslV subfamily. A double ring-shaped homohexamer of HslV is capped on each side by a ring-shaped HslU homohexamer. The assembly of the HslU/HslV complex is dependent on binding of ATP.

The protein resides in the cytoplasm. The catalysed reaction is ATP-dependent cleavage of peptide bonds with broad specificity.. Allosterically activated by HslU binding. Its function is as follows. Protease subunit of a proteasome-like degradation complex believed to be a general protein degrading machinery. The polypeptide is ATP-dependent protease subunit HslV (Bacillus cereus (strain ATCC 10987 / NRS 248)).